Reading from the N-terminus, the 98-residue chain is Co-chaperonin GroES 5 (98 aa).

Belongs to the GroES chaperonin family. As to quaternary structure, heptamer of 7 subunits arranged in a ring. Interacts with the chaperonin GroEL.

The protein localises to the cytoplasm. In terms of biological role, together with the chaperonin GroEL, plays an essential role in assisting protein folding. The GroEL-GroES system forms a nano-cage that allows encapsulation of the non-native substrate proteins and provides a physical environment optimized to promote and accelerate protein folding. GroES binds to the apical surface of the GroEL ring, thereby capping the opening of the GroEL channel. In Mesorhizobium japonicum (strain LMG 29417 / CECT 9101 / MAFF 303099) (Mesorhizobium loti (strain MAFF 303099)), this protein is Co-chaperonin GroES 5.